The following is a 168-amino-acid chain: ATP synthase subunit b (168 aa).

A helical membrane pass occupies residues 9–29 (AIPFGTIAYTLFIFLILLVML).

It belongs to the ATPase B chain family. In terms of assembly, F-type ATPases have 2 components, F(1) - the catalytic core - and F(0) - the membrane proton channel. F(1) has five subunits: alpha(3), beta(3), gamma(1), delta(1), epsilon(1). F(0) has three main subunits: a(1), b(2) and c(10-14). The alpha and beta chains form an alternating ring which encloses part of the gamma chain. F(1) is attached to F(0) by a central stalk formed by the gamma and epsilon chains, while a peripheral stalk is formed by the delta and b chains.

Its subcellular location is the cell membrane. Its function is as follows. F(1)F(0) ATP synthase produces ATP from ADP in the presence of a proton or sodium gradient. F-type ATPases consist of two structural domains, F(1) containing the extramembraneous catalytic core and F(0) containing the membrane proton channel, linked together by a central stalk and a peripheral stalk. During catalysis, ATP synthesis in the catalytic domain of F(1) is coupled via a rotary mechanism of the central stalk subunits to proton translocation. In terms of biological role, component of the F(0) channel, it forms part of the peripheral stalk, linking F(1) to F(0). The polypeptide is ATP synthase subunit b (Bacillus cereus (strain G9842)).